The sequence spans 572 residues: Proline--tRNA ligase (572 aa).

This sequence belongs to the class-II aminoacyl-tRNA synthetase family. ProS type 1 subfamily. As to quaternary structure, homodimer.

The protein resides in the cytoplasm. The enzyme catalyses tRNA(Pro) + L-proline + ATP = L-prolyl-tRNA(Pro) + AMP + diphosphate. Catalyzes the attachment of proline to tRNA(Pro) in a two-step reaction: proline is first activated by ATP to form Pro-AMP and then transferred to the acceptor end of tRNA(Pro). As ProRS can inadvertently accommodate and process non-cognate amino acids such as alanine and cysteine, to avoid such errors it has two additional distinct editing activities against alanine. One activity is designated as 'pretransfer' editing and involves the tRNA(Pro)-independent hydrolysis of activated Ala-AMP. The other activity is designated 'posttransfer' editing and involves deacylation of mischarged Ala-tRNA(Pro). The misacylated Cys-tRNA(Pro) is not edited by ProRS. In Salmonella newport (strain SL254), this protein is Proline--tRNA ligase.